The following is a 449-amino-acid chain: Tubulin beta chain (449 aa).

Positions 11, 69, 138, 142, 143, 144, 204, and 226 each coordinate GTP. Residue glutamate 69 coordinates Mg(2+). The interval 426-449 (QDATAEEEGEFDEEEGEMGAEEGA) is disordered. Acidic residues predominate over residues 429–449 (TAEEEGEFDEEEGEMGAEEGA).

It belongs to the tubulin family. In terms of assembly, dimer of alpha and beta chains. A typical microtubule is a hollow water-filled tube with an outer diameter of 25 nm and an inner diameter of 15 nM. Alpha-beta heterodimers associate head-to-tail to form protofilaments running lengthwise along the microtubule wall with the beta-tubulin subunit facing the microtubule plus end conferring a structural polarity. Microtubules usually have 13 protofilaments but different protofilament numbers can be found in some organisms and specialized cells. The cofactor is Mg(2+).

The protein resides in the cytoplasm. The protein localises to the cytoskeleton. In terms of biological role, tubulin is the major constituent of microtubules, a cylinder consisting of laterally associated linear protofilaments composed of alpha- and beta-tubulin heterodimers. Microtubules grow by the addition of GTP-tubulin dimers to the microtubule end, where a stabilizing cap forms. Below the cap, tubulin dimers are in GDP-bound state, owing to GTPase activity of alpha-tubulin. The chain is Tubulin beta chain from Toxoplasma gondii.